A 356-amino-acid polypeptide reads, in one-letter code: Phospho-2-dehydro-3-deoxyheptonate aldolase, Tyr-sensitive (356 aa).

It belongs to the class-I DAHP synthase family.

The catalysed reaction is D-erythrose 4-phosphate + phosphoenolpyruvate + H2O = 7-phospho-2-dehydro-3-deoxy-D-arabino-heptonate + phosphate. Its pathway is metabolic intermediate biosynthesis; chorismate biosynthesis; chorismate from D-erythrose 4-phosphate and phosphoenolpyruvate: step 1/7. Functionally, stereospecific condensation of phosphoenolpyruvate (PEP) and D-erythrose-4-phosphate (E4P) giving rise to 3-deoxy-D-arabino-heptulosonate-7-phosphate (DAHP). The polypeptide is Phospho-2-dehydro-3-deoxyheptonate aldolase, Tyr-sensitive (aroF) (Salmonella typhi).